Reading from the N-terminus, the 217-residue chain is Uracil-DNA glycosylase (217 aa).

Asp62 functions as the Proton acceptor in the catalytic mechanism.

This sequence belongs to the uracil-DNA glycosylase (UDG) superfamily. UNG family.

It is found in the cytoplasm. The enzyme catalyses Hydrolyzes single-stranded DNA or mismatched double-stranded DNA and polynucleotides, releasing free uracil.. Functionally, excises uracil residues from the DNA which can arise as a result of misincorporation of dUMP residues by DNA polymerase or due to deamination of cytosine. The chain is Uracil-DNA glycosylase from Streptococcus equi subsp. equi (strain 4047).